The primary structure comprises 602 residues: MFS-type efflux transporter pyiT (602 aa).

Residues 1-33 are disordered; it reads MEKAKDSLPTTGDPVPSQGTINPVDETGGSASD. A run of 7 helical transmembrane segments spans residues 43 to 63, 123 to 143, 156 to 176, 185 to 205, 212 to 232, 251 to 271, and 282 to 302; these read FWFT…EGSV, WLTI…GGAT, GLGS…LLPL, IIFM…GILV, WVFY…FFFL, FFGN…LTYG, and IIVS…FEAS. N-linked (GlcNAc...) asparagine glycosylation occurs at asparagine 317. Transmembrane regions (helical) follow at residues 325-345, 357-377, 386-406, 410-430, 451-471, and 524-544; these read IATF…PLYF, GVML…GGAL, NIHF…TILN, SLAV…VPTA, TFAF…AAIF, and LERV…VIFL. A compositionally biased stretch (polar residues) spans 564–585; it reads IPQTAADNSASRPNTINDTASQ. Positions 564–602 are disordered; sequence IPQTAADNSASRPNTINDTASQAPILKQRRSTNQERETV. Asparagine 580 carries N-linked (GlcNAc...) asparagine glycosylation.

Belongs to the major facilitator superfamily.

The protein localises to the cell membrane. Its function is as follows. MFS-type efflux transporter; part of the gene cluster that mediates the biosynthesis of the mycotoxin pyrichalasin H, a tyrosine-derived cytochalasan that inhibits the growth of rice seedlings, but also inhibits lymphocyte capping and actin polymerization and alters cell morphology. Pyrichalasin H is indicated as the responsible agent for the genus-specific pathogenicity of M.grisea toward crabgrass. PyiT might be involved in the excretion of pyrichalasin H. The protein is MFS-type efflux transporter pyiT of Pyricularia grisea (Crabgrass-specific blast fungus).